Here is a 288-residue protein sequence, read N- to C-terminus: Methyltransferase ucsB (288 aa).

S-adenosyl-L-methionine-binding positions include Asp-87 and 121–122 (DA).

The protein belongs to the class I-like SAM-binding methyltransferase superfamily.

It functions in the pathway mycotoxin biosynthesis. In terms of biological role, methyltransferase; part of the gene cluster that mediates the biosynthesis of UCS1025A, a member of the pyrrolizidinone family that acts as a strong telomerase inhibitor and displays potent antibacterial and antitumor properties. These compounds share a hemiaminal-containing pyrrolizidinone core fused with a gamma-lactone, giving a furopyrrolizidine that is connected to a decalin fragment. The polyketide synthase module (PKS) of the PKS-NRPS ucsA is responsible for the synthesis of the polyketide backbone via the condensation of an acetyl-CoA starter unit with 6 malonyl-CoA units. The downstream nonribosomal peptide synthetase (NRPS) module then amidates the carboxyl end of the polyketide with a 2S,3S-methylproline derived from L-isoleucine by the 2-oxoglutarate-dependent dioxygenase ucsF which converts L-isoleucine to (4S,5S)-4-methylpyrroline-5-carboxylate that is further converted to 2S,3S-methylproline by the pyrroline-5-carboxylate reductase ucsG. Reductive release of the completed aminoacyl polyketide from the assembly line can form the 3-pyrrolin-2-one structure via an intramolecular Knoevenagel reaction. Because ucsA lacks a designated enoylreductase (ER) domain, the required activity is provided the enoyl reductase ucsL. This keto acyclic precursor is the substrate of the Diels-Alderase ucsH, that catalyzes the Diels-Alder cycloaddition. Oxidation of the 3S-methyl group to a carboxylate by the cytochrome P450 monooxygenase ucsK allows an oxa-Michael cyclization that might involve the reductase/dehydrogenase ucsI and which furnishes the furopyrrolizidine. The oxidase ucsJ likely plays a critical role in stereoselective reduction of the C5-C6 double bond to afford the required R-configured carboxylate group. Further enolization and oxidation at C5 by an unidentified enzyme affords the last intermediate that can undergo oxa-Michael cyclization to yield UCS1025A. The polypeptide is Methyltransferase ucsB (Acremonium sp).